The primary structure comprises 378 residues: Zinc transporter 7 (378 aa).

At 1–37 (MLPLSIKDDEYKPPKFNLFGKISGWFRSILSDKTSRN) the chain is on the cytoplasmic side. A helical membrane pass occupies residues 38–58 (LFFFLCLNLSFAFVELLYGIW). The Lumenal portion of the chain corresponds to 59–67 (SNCLGLISD). Residues 68 to 88 (SFHMFFDSTAILAGLAASVIS) traverse the membrane as a helical segment. Over 89–102 (KWRDNDAFSYGYVR) the chain is Cytoplasmic. A helical transmembrane segment spans residues 103–123 (AEVLAGFVNGLFLIFTAFFIF). Residues 124-140 (SEGVERALAPPDVHHER) are Lumenal-facing. Residues 141 to 161 (LLLVSILGFVVNLVGIFVFNH) form a helical membrane-spanning segment. Residues 161–220 (HGGHGHSHGSGHGHSHSLFNGALDHSHGHEDHCHSHGAKHGGAHSHDHDHAHGHGHLHSH) are his-rich loop. The Cytoplasmic segment spans residues 162-238 (GGHGHSHGSG…AGPSRQILQG (77 aa)). Positions 186–228 (SHGHEDHCHSHGAKHGGAHSHDHDHAHGHGHLHSHDGPSFKET) are disordered. The span at 204–224 (HSHDHDHAHGHGHLHSHDGPS) shows a compositional bias: basic and acidic residues. A helical transmembrane segment spans residues 239–259 (VFLHILADTLGSIGVIASAIM). The Lumenal portion of the chain corresponds to 260-264 (MQNFG). A helical transmembrane segment spans residues 265–285 (LMIADPICSILIAILIVVSVI). Residues 286–378 (PLLRESIGIL…LYVQIDFAAM (93 aa)) lie on the Cytoplasmic side of the membrane.

Belongs to the cation diffusion facilitator (CDF) transporter (TC 2.A.4) family. SLC30A subfamily. In terms of assembly, homooligomer.

The protein localises to the golgi apparatus membrane. The protein resides in the cytoplasmic vesicle. It localises to the golgi apparatus. Its subcellular location is the trans-Golgi network. It is found in the sarcoplasmic reticulum. The protein localises to the mitochondrion. It catalyses the reaction Zn(2+)(in) = Zn(2+)(out). Its function is as follows. Zinc ion transporter mediating zinc entry from the cytosol into the lumen of organelles along the secretory pathway. By contributing to zinc ion homeostasis within the early secretory pathway, regulates the activation and folding of enzymes like alkaline phosphatases. This is Zinc transporter 7 from Rattus norvegicus (Rat).